Here is a 131-residue protein sequence, read N- to C-terminus: Anaerobic and virulence modulator AnvM (131 aa).

Functionally, plays an essential role by modulating the expression of hundreds of genes including quorum sensing system genes and oxidative stress resistance genes under both aerobic and anaerobic conditions. The chain is Anaerobic and virulence modulator AnvM from Pseudomonas aeruginosa (strain ATCC 15692 / DSM 22644 / CIP 104116 / JCM 14847 / LMG 12228 / 1C / PRS 101 / PAO1).